The sequence spans 340 residues: Putative UPF0607 protein ENSP00000332738 (340 aa).

Residues 75-90 are compositionally biased toward basic and acidic residues; sequence VRAEEPKEATEVKDQV. Disordered stretches follow at residues 75-130 and 215-281; these read VRAE…NPRP and GLLM…KLPC. Polar residues predominate over residues 91 to 126; it reads ETQGQEDNKTGPCSNGKAASTSRPLETQGNLTSSWY. Residues 228–241 are compositionally biased toward low complexity; the sequence is PAALRSSRSSPPRA. The span at 242-251 shows a compositional bias: basic residues; that stretch reads AGHRPRKRKL. The segment covering 254–266 has biased composition (low complexity); that stretch reads PPLQLQQTPPLQL.

The protein belongs to the UPF0607 family.

The polypeptide is Putative UPF0607 protein ENSP00000332738 (Homo sapiens (Human)).